The sequence spans 188 residues: ATP synthase subunit b (188 aa).

A helical transmembrane segment spans residues 24–44 (LPASYDIVWSLVVFIIVLILF).

This sequence belongs to the ATPase B chain family. In terms of assembly, F-type ATPases have 2 components, F(1) - the catalytic core - and F(0) - the membrane proton channel. F(1) has five subunits: alpha(3), beta(3), gamma(1), delta(1), epsilon(1). F(0) has three main subunits: a(1), b(2) and c(10-14). The alpha and beta chains form an alternating ring which encloses part of the gamma chain. F(1) is attached to F(0) by a central stalk formed by the gamma and epsilon chains, while a peripheral stalk is formed by the delta and b chains.

It localises to the cell membrane. In terms of biological role, f(1)F(0) ATP synthase produces ATP from ADP in the presence of a proton or sodium gradient. F-type ATPases consist of two structural domains, F(1) containing the extramembraneous catalytic core and F(0) containing the membrane proton channel, linked together by a central stalk and a peripheral stalk. During catalysis, ATP synthesis in the catalytic domain of F(1) is coupled via a rotary mechanism of the central stalk subunits to proton translocation. Component of the F(0) channel, it forms part of the peripheral stalk, linking F(1) to F(0). This is ATP synthase subunit b from Corynebacterium diphtheriae (strain ATCC 700971 / NCTC 13129 / Biotype gravis).